We begin with the raw amino-acid sequence, 344 residues long: Dihydroorotase (344 aa).

Residues His-13 and His-15 each contribute to the Zn(2+) site. Substrate is bound by residues 15-17 (HLR) and Asn-41. Zn(2+)-binding residues include Lys-99, His-136, and His-174. Lys-99 is modified (N6-carboxylysine). His-136 contributes to the substrate binding site. Leu-219 provides a ligand contact to substrate. Asp-247 lines the Zn(2+) pocket. Residue Asp-247 is part of the active site. Residues His-251 and Ala-263 each contribute to the substrate site.

The protein belongs to the metallo-dependent hydrolases superfamily. DHOase family. Class II DHOase subfamily. As to quaternary structure, homodimer. It depends on Zn(2+) as a cofactor.

It carries out the reaction (S)-dihydroorotate + H2O = N-carbamoyl-L-aspartate + H(+). It functions in the pathway pyrimidine metabolism; UMP biosynthesis via de novo pathway; (S)-dihydroorotate from bicarbonate: step 3/3. In terms of biological role, catalyzes the reversible cyclization of carbamoyl aspartate to dihydroorotate. The protein is Dihydroorotase of Idiomarina loihiensis (strain ATCC BAA-735 / DSM 15497 / L2-TR).